The primary structure comprises 402 residues: DNA polymerase IV (402 aa).

The region spanning 5 to 187 (ILLADMNSFY…LPVRELFGVG (183 aa)) is the UmuC domain. Mg(2+)-binding residues include D9 and D105. E106 is an active-site residue.

It belongs to the DNA polymerase type-Y family. Monomer. It depends on Mg(2+) as a cofactor.

It is found in the cytoplasm. It carries out the reaction DNA(n) + a 2'-deoxyribonucleoside 5'-triphosphate = DNA(n+1) + diphosphate. In terms of biological role, poorly processive, error-prone DNA polymerase involved in untargeted mutagenesis. Copies undamaged DNA at stalled replication forks, which arise in vivo from mismatched or misaligned primer ends. These misaligned primers can be extended by PolIV. Exhibits no 3'-5' exonuclease (proofreading) activity. May be involved in translesional synthesis, in conjunction with the beta clamp from PolIII. The polypeptide is DNA polymerase IV (Pelotomaculum thermopropionicum (strain DSM 13744 / JCM 10971 / SI)).